We begin with the raw amino-acid sequence, 215 residues long: MATERHYSPLDRLLLQADSAMRTLLPLSAHPQRPSPAVVQPDHKMSDVDTRHVAGLMRINHTGEVCAQALYQGQALTAKLPKVRKAMEHAAEEEIDHLVWCEQRIHQLGSHTSVLNPLFYGLSFGIGAVAGVISDRVSLGFVAATEDQVCKHLSEHLEQLPSEDGKSRAILEQMLNDEEHHAESALEAGGFRFPAPVKFGMSILAKVMTKSTYRI.

Residues glutamate 64, glutamate 94, histidine 97, glutamate 146, glutamate 178, and histidine 181 each coordinate Fe cation.

This sequence belongs to the COQ7 family. Requires Fe cation as cofactor.

It is found in the cell membrane. It catalyses the reaction a 5-methoxy-2-methyl-3-(all-trans-polyprenyl)benzene-1,4-diol + AH2 + O2 = a 3-demethylubiquinol + A + H2O. It functions in the pathway cofactor biosynthesis; ubiquinone biosynthesis. Catalyzes the hydroxylation of 2-nonaprenyl-3-methyl-6-methoxy-1,4-benzoquinol during ubiquinone biosynthesis. The sequence is that of 3-demethoxyubiquinol 3-hydroxylase from Pseudomonas savastanoi pv. phaseolicola (strain 1448A / Race 6) (Pseudomonas syringae pv. phaseolicola (strain 1448A / Race 6)).